The primary structure comprises 226 residues: Protein GrpE (226 aa).

Disordered stretches follow at residues 1 to 24 (MADEKNKPENPDLDQRDINNPRDR) and 205 to 226 (GVSKGGPKVSAENGASTSEDNA). Polar residues predominate over residues 217 to 226 (NGASTSEDNA).

The protein belongs to the GrpE family. As to quaternary structure, homodimer.

It is found in the cytoplasm. Functionally, participates actively in the response to hyperosmotic and heat shock by preventing the aggregation of stress-denatured proteins, in association with DnaK and GrpE. It is the nucleotide exchange factor for DnaK and may function as a thermosensor. Unfolded proteins bind initially to DnaJ; upon interaction with the DnaJ-bound protein, DnaK hydrolyzes its bound ATP, resulting in the formation of a stable complex. GrpE releases ADP from DnaK; ATP binding to DnaK triggers the release of the substrate protein, thus completing the reaction cycle. Several rounds of ATP-dependent interactions between DnaJ, DnaK and GrpE are required for fully efficient folding. The sequence is that of Protein GrpE from Brucella melitensis biotype 1 (strain ATCC 23456 / CCUG 17765 / NCTC 10094 / 16M).